Reading from the N-terminus, the 210-residue chain is Homeobox protein Rhox5 (210 aa).

The disordered stretch occupies residues 29–117 (KAEAFLQAGE…KNGKPEDRQM (89 aa)). A DNA-binding region (homeobox; atypical) is located at residues 117–175 (MPLQGSRFAQQRLSELQSILQRTNSFDVPREDLYRLMDTCVARVQNWFKIRRAAARRNR).

Its subcellular location is the nucleus. Its function is as follows. Transcription factor required for differentiation of embryonic stem cells (ESCs) into primordial germ cells. The protein is Homeobox protein Rhox5 (Rhox5) of Mus minutoides (Southern African pygmy mouse).